Consider the following 401-residue polypeptide: Argininosuccinate synthase (401 aa).

8–16 (AYSGGLDTS) provides a ligand contact to ATP. Residue tyrosine 85 participates in L-citrulline binding. An ATP-binding site is contributed by glycine 115. Positions 117, 121, and 122 each coordinate L-aspartate. Residue asparagine 121 participates in L-citrulline binding. Residues arginine 125, serine 173, glutamate 258, and tyrosine 270 each coordinate L-citrulline.

It belongs to the argininosuccinate synthase family. Type 1 subfamily. Homotetramer.

It localises to the cytoplasm. The enzyme catalyses L-citrulline + L-aspartate + ATP = 2-(N(omega)-L-arginino)succinate + AMP + diphosphate + H(+). The protein operates within amino-acid biosynthesis; L-arginine biosynthesis; L-arginine from L-ornithine and carbamoyl phosphate: step 2/3. The protein is Argininosuccinate synthase of Staphylococcus epidermidis (strain ATCC 35984 / DSM 28319 / BCRC 17069 / CCUG 31568 / BM 3577 / RP62A).